Reading from the N-terminus, the 410-residue chain is Arginine deiminase (410 aa).

The active-site Amidino-cysteine intermediate is Cys-400.

Belongs to the arginine deiminase family.

The protein localises to the cytoplasm. It catalyses the reaction L-arginine + H2O = L-citrulline + NH4(+). It participates in amino-acid degradation; L-arginine degradation via ADI pathway; carbamoyl phosphate from L-arginine: step 1/2. The polypeptide is Arginine deiminase (Bacillus thuringiensis subsp. konkukian (strain 97-27)).